The sequence spans 332 residues: Putative potassium channel regulatory protein sup-10 (332 aa).

A signal peptide spans 1–18; sequence MRYAVFIFLIVLIDLIYC. Over 19–301 the chain is Extracellular; it reads WNSKRSFFIP…EISERNKRPA (283 aa). Residues asparagine 61, asparagine 107, and asparagine 166 are each glycosylated (N-linked (GlcNAc...) asparagine). The chain crosses the membrane as a helical span at residues 302–322; the sequence is FVLVGLTGGIAVIILAFSIFW. The Cytoplasmic portion of the chain corresponds to 323–332; the sequence is GLNGSGFNKD.

As to quaternary structure, may form a complex with sup-9 and unc-93 where sup-10 and unc-93 act as regulatory subunits of the two pore potassium channel sup-9. Sup-10 may regulate sup-9 via sup-18. In terms of tissue distribution, low levels in body-wall muscles, eight vulval muscles, intestinal muscles and anal depressor muscle.

Its subcellular location is the membrane. May contribute to coordination of muscle contraction as regulatory subunit of a nonessential potassium channel complex. The sequence is that of Putative potassium channel regulatory protein sup-10 from Caenorhabditis elegans.